The chain runs to 654 residues: Chaperone protein DnaK (654 aa).

A Phosphothreonine; by autocatalysis modification is found at Thr-205. Positions 592 to 654 (ELERQMQQIG…EVEILDDKKP (63 aa)) are disordered. Residues 608 to 621 (AGQSETQSTGPGSY) are compositionally biased toward polar residues. Residues 622-636 (QESSNQSSQHQTNNN) show a composition bias toward low complexity.

This sequence belongs to the heat shock protein 70 family.

Its function is as follows. Acts as a chaperone. This is Chaperone protein DnaK from Protochlamydia amoebophila (strain UWE25).